A 650-amino-acid chain; its full sequence is Aminopeptidase B (650 aa).

The residue at position 2 (A2) is an N-acetylalanine. Position 7 is a phosphoserine (S7). Substrate is bound at residue G298–N302. H325 contacts Zn(2+). Residue E326 is the Proton acceptor of the active site. 2 residues coordinate Zn(2+): H329 and E348. K446 is subject to N6-acetyllysine.

Belongs to the peptidase M1 family. Zn(2+) serves as cofactor.

The protein resides in the secreted. It catalyses the reaction Release of N-terminal Arg and Lys from oligopeptides when P1' is not Pro. Also acts on arylamides of Arg and Lys.. Exopeptidase which selectively removes arginine and/or lysine residues from the N-terminus of several peptide substrates including Arg(0)-Leu-enkephalin, Arg(0)-Met-enkephalin and Arg(-1)-Lys(0)-somatostatin-14. Can hydrolyze leukotriene A4 (LTA-4) into leukotriene B4 (LTB-4). This chain is Aminopeptidase B (RNPEP), found in Homo sapiens (Human).